The following is a 289-amino-acid chain: Polyamine aminopropyltransferase (289 aa).

A PABS domain is found at 5 to 245 (PGPITLIEPL…YAVNFILGSL (241 aa)). Gln-36 provides a ligand contact to S-methyl-5'-thioadenosine. Residues His-67 and Glu-91 each coordinate spermidine. Residues Asp-111 and 143-144 (DG) contribute to the S-methyl-5'-thioadenosine site. Asp-164 functions as the Proton acceptor in the catalytic mechanism.

The protein belongs to the spermidine/spermine synthase family. As to quaternary structure, homodimer or homotetramer.

It is found in the cytoplasm. The enzyme catalyses S-adenosyl 3-(methylsulfanyl)propylamine + putrescine = S-methyl-5'-thioadenosine + spermidine + H(+). It functions in the pathway amine and polyamine biosynthesis; spermidine biosynthesis; spermidine from putrescine: step 1/1. Catalyzes the irreversible transfer of a propylamine group from the amino donor S-adenosylmethioninamine (decarboxy-AdoMet) to putrescine (1,4-diaminobutane) to yield spermidine. This chain is Polyamine aminopropyltransferase, found in Pyrobaculum calidifontis (strain DSM 21063 / JCM 11548 / VA1).